The following is a 201-amino-acid chain: Phosphoheptose isomerase (201 aa).

An SIS domain is found at 36–195 (IAKSLNEGGK…EDILFEIPAA (160 aa)). 51–53 (NGG) provides a ligand contact to substrate. Zn(2+) contacts are provided by His60 and Glu64. Residues Glu64, 93–94 (ND), 119–121 (STS), Ser124, and Gln171 each bind substrate. Positions 171 and 179 each coordinate Zn(2+).

The protein belongs to the SIS family. GmhA subfamily. The cofactor is Zn(2+).

It is found in the cytoplasm. It carries out the reaction 2 D-sedoheptulose 7-phosphate = D-glycero-alpha-D-manno-heptose 7-phosphate + D-glycero-beta-D-manno-heptose 7-phosphate. It functions in the pathway carbohydrate biosynthesis; D-glycero-D-manno-heptose 7-phosphate biosynthesis; D-glycero-alpha-D-manno-heptose 7-phosphate and D-glycero-beta-D-manno-heptose 7-phosphate from sedoheptulose 7-phosphate: step 1/1. Its function is as follows. Catalyzes the isomerization of sedoheptulose 7-phosphate in D-glycero-D-manno-heptose 7-phosphate. The polypeptide is Phosphoheptose isomerase (Thermodesulfovibrio yellowstonii (strain ATCC 51303 / DSM 11347 / YP87)).